Here is a 112-residue protein sequence, read N- to C-terminus: UPF0145 protein MmarC6_1828 (112 aa).

It belongs to the UPF0145 family.

The sequence is that of UPF0145 protein MmarC6_1828 from Methanococcus maripaludis (strain C6 / ATCC BAA-1332).